Consider the following 438-residue polypeptide: 23S rRNA (uracil(1939)-C(5))-methyltransferase RlmD (438 aa).

The region spanning 9-68 (RRTVNRHIITVTADNLDAQGQGVARHQGKTIFVAGLLPGEQAQVQLTEEKRQFAKAKLVK) is the TRAM domain. Cysteine 81, cysteine 87, cysteine 90, and cysteine 168 together coordinate [4Fe-4S] cluster. Glutamine 272, phenylalanine 301, asparagine 306, glutamate 322, asparagine 349, and aspartate 370 together coordinate S-adenosyl-L-methionine. Cysteine 396 acts as the Nucleophile in catalysis.

It belongs to the class I-like SAM-binding methyltransferase superfamily. RNA M5U methyltransferase family. RlmD subfamily.

It catalyses the reaction uridine(1939) in 23S rRNA + S-adenosyl-L-methionine = 5-methyluridine(1939) in 23S rRNA + S-adenosyl-L-homocysteine + H(+). In terms of biological role, catalyzes the formation of 5-methyl-uridine at position 1939 (m5U1939) in 23S rRNA. The protein is 23S rRNA (uracil(1939)-C(5))-methyltransferase RlmD of Photorhabdus laumondii subsp. laumondii (strain DSM 15139 / CIP 105565 / TT01) (Photorhabdus luminescens subsp. laumondii).